Here is a 494-residue protein sequence, read N- to C-terminus: NADH-quinone oxidoreductase subunit N 2 (494 aa).

Transmembrane regions (helical) follow at residues 14-34 (LPQI…GMLL), 45-65 (IAML…PLTA), 82-102 (VVQV…GSVL), 116-136 (IGEF…LVST), 139-159 (LLLI…LTAF), 174-194 (FLFG…LYGV), 214-234 (LLVA…AAPF), 262-282 (FFVF…NAAW), 289-309 (WMPI…LAAL), 317-337 (LLAY…IAHT), 344-364 (LLYY…VLAI), 388-408 (ACLL…GFFA), 422-442 (AFGL…ALFY), and 470-490 (ITLL…NLLM).

Belongs to the complex I subunit 2 family. As to quaternary structure, NDH-1 is composed of 14 different subunits. Subunits NuoA, H, J, K, L, M, N constitute the membrane sector of the complex.

It localises to the cell inner membrane. The catalysed reaction is a quinone + NADH + 5 H(+)(in) = a quinol + NAD(+) + 4 H(+)(out). Functionally, NDH-1 shuttles electrons from NADH, via FMN and iron-sulfur (Fe-S) centers, to quinones in the respiratory chain. The immediate electron acceptor for the enzyme in this species is believed to be ubiquinone. Couples the redox reaction to proton translocation (for every two electrons transferred, four hydrogen ions are translocated across the cytoplasmic membrane), and thus conserves the redox energy in a proton gradient. The chain is NADH-quinone oxidoreductase subunit N 2 from Acidobacterium capsulatum (strain ATCC 51196 / DSM 11244 / BCRC 80197 / JCM 7670 / NBRC 15755 / NCIMB 13165 / 161).